A 253-amino-acid polypeptide reads, in one-letter code: UPF0280 protein Mbar_A3697 (253 aa).

Belongs to the UPF0280 family.

This Methanosarcina barkeri (strain Fusaro / DSM 804) protein is UPF0280 protein Mbar_A3697.